Consider the following 207-residue polypeptide: Ras-related protein Rab-7a (207 aa).

Thr-2 carries the post-translational modification N-acetylthreonine. Residues Ser-17, Gly-18, Val-19, Gly-20, Lys-21, Thr-22, Ser-23, Ser-34, Asn-35, Tyr-37, and Thr-40 each coordinate GTP. Residue Thr-22 coordinates Mg(2+). The short motif at 28–41 (YVNKKFSNQYKATI) is the Switch 1 element. Positions 40 and 63 each coordinate Mg(2+). Gly-66 contributes to the GTP binding site. A Switch 2 motif is present at residues 67 to 82 (QERFQSLSVAFYRGAD). Ser-72 is modified (phosphoserine). Asn-125, Lys-126, Asp-128, Ala-156, and Lys-157 together coordinate GTP. Glycyl lysine isopeptide (Lys-Gly) (interchain with G-Cter in ubiquitin) cross-links involve residues Lys-191 and Lys-194. S-geranylgeranyl cysteine attachment occurs at residues Cys-205 and Cys-207. Cys-207 is subject to Cysteine methyl ester.

Belongs to the small GTPase superfamily. Rab family. Interacts with NTRK1/TRKA. Interacts with RILP. Interacts with PSMA7. Interacts with RNF115. Interacts with FYCO1. Interacts with the PIK3C3/VPS34-PIK3R4 complex. The GTP-bound form interacts with OSBPL1A. The GTP-bound form interacts with RAC1. Interacts with CLN3. Interacts with CHM, the substrate-binding subunit of the Rab geranylgeranyltransferase complex. Interacts with C9orf72. Does not interact with HPS4 and the BLOC-3 complex (heterodimer of HPS1 and HPS4). Interacts with CLN5. Interacts with PLEKHM1 (via N- and C-terminus). Interacts with PRPH; the interaction is direct. Interacts with VPS13A. The GDP-bound form interacts with RIMOC1. Interacts with the MON1A-CCZ1B complex and this interaction is enhanced in the presence of RIMOC1. Interacts with VPS39 and VPS41. Forms a ternary complex with LAMP2 and RUFY4; the interaction with LAMP2 is mediated by RUFY4 (via RUN and coiled coil domains). Mg(2+) serves as cofactor. In terms of processing, deubiquitination at Lys-191 and Lys-194 by USP32. Post-translationally, phosphorylated at Ser-72 by LRRK1; phosphorylation is dependent on protein kinase C (PKC) activation of LRRK1. Prenylated. Prenylation is required for association with cellular membranes.

The protein localises to the cytoplasmic vesicle. It is found in the phagosome membrane. It localises to the late endosome membrane. The protein resides in the lysosome membrane. Its subcellular location is the melanosome membrane. The protein localises to the autophagosome membrane. It is found in the lipid droplet. It localises to the endosome membrane. The protein resides in the mitochondrion membrane. The enzyme catalyses GTP + H2O = GDP + phosphate + H(+). Its activity is regulated as follows. Regulated by guanine nucleotide exchange factors (GEFs) which promote the exchange of bound GDP for free GTP. Regulated by GTPase activating proteins (GAPs) which increase the GTP hydrolysis activity. Inhibited by GDP dissociation inhibitors (GDIs). In terms of biological role, the small GTPases Rab are key regulators of intracellular membrane trafficking, from the formation of transport vesicles to their fusion with membranes. Rabs cycle between an inactive GDP-bound form and an active GTP-bound form that is able to recruit to membranes different sets of downstream effectors directly responsible for vesicle formation, movement, tethering and fusion. In its active state, RAB7A binds to a variety of effector proteins playing a key role in the regulation of endo-lysosomal trafficking. Governs early-to-late endosomal maturation, microtubule minus-end as well as plus-end directed endosomal migration and positioning, and endosome-lysosome transport through different protein-protein interaction cascades. Also plays a central role in growth-factor-mediated cell signaling, nutrient-transporter-mediated nutrient uptake, neurotrophin transport in the axons of neurons and lipid metabolism. Also involved in regulation of some specialized endosomal membrane trafficking, such as maturation of melanosomes, pathogen-induced phagosomes (or vacuoles) and autophagosomes. Plays a role in the maturation and acidification of phagosomes that engulf pathogens, such as S.aureus and Mycobacteria. Plays a role in the fusion of phagosomes with lysosomes. In concert with RAC1, plays a role in regulating the formation of RBs (ruffled borders) in osteoclasts. Controls the endosomal trafficking and neurite outgrowth signaling of NTRK1/TRKA. Regulates the endocytic trafficking of the EGF-EGFR complex by regulating its lysosomal degradation. Involved in the ADRB2-stimulated lipolysis through lipophagy, a cytosolic lipase-independent autophagic pathway. Required for the exosomal release of SDCBP, CD63 and syndecan. Required for vesicular trafficking and cell surface expression of ACE2. May play a role in PRPH neuronal intermediate filament assembly. In Oryctolagus cuniculus (Rabbit), this protein is Ras-related protein Rab-7a (RAB7A).